A 353-amino-acid chain; its full sequence is UDP-N-acetylglucosamine--N-acetylmuramyl-(pentapeptide) pyrophosphoryl-undecaprenol N-acetylglucosamine transferase (353 aa).

Residues Thr10–Gly12, Asn124, Ser183, and Gln283 each bind UDP-N-acetyl-alpha-D-glucosamine.

Belongs to the glycosyltransferase 28 family. MurG subfamily.

It is found in the cell inner membrane. The enzyme catalyses di-trans,octa-cis-undecaprenyl diphospho-N-acetyl-alpha-D-muramoyl-L-alanyl-D-glutamyl-meso-2,6-diaminopimeloyl-D-alanyl-D-alanine + UDP-N-acetyl-alpha-D-glucosamine = di-trans,octa-cis-undecaprenyl diphospho-[N-acetyl-alpha-D-glucosaminyl-(1-&gt;4)]-N-acetyl-alpha-D-muramoyl-L-alanyl-D-glutamyl-meso-2,6-diaminopimeloyl-D-alanyl-D-alanine + UDP + H(+). It participates in cell wall biogenesis; peptidoglycan biosynthesis. Its function is as follows. Cell wall formation. Catalyzes the transfer of a GlcNAc subunit on undecaprenyl-pyrophosphoryl-MurNAc-pentapeptide (lipid intermediate I) to form undecaprenyl-pyrophosphoryl-MurNAc-(pentapeptide)GlcNAc (lipid intermediate II). The sequence is that of UDP-N-acetylglucosamine--N-acetylmuramyl-(pentapeptide) pyrophosphoryl-undecaprenol N-acetylglucosamine transferase from Helicobacter pylori (strain G27).